The sequence spans 2134 residues: Genome polyprotein (2134 aa).

Residues 1 to 1377 (MSKLFSTVGR…WLFERLKTSK (1377 aa)) lie on the Cytoplasmic side of the membrane. The LRAT domain maps to 781–882 (IVSCSGEKAK…GDYGTKEGEK (102 aa)). Active-site residues include histidine 791 and histidine 802. The active-site Acyl-thioester intermediate is cysteine 863. One can recognise an SF3 helicase domain in the interval 1127–1289 (LNKLGRLDKP…EEFSTHAMLD (163 aa)). Residue 1153–1160 (GNRGGGKS) participates in ATP binding. An intramembrane segment occupies 1378-1392 (WYILGCVGAVLAVSA). Topologically, residues 1393–2134 (LGVFAYHMIK…VKYRFIDDNF (742 aa)) are cytoplasmic. The residue at position 1415 (tyrosine 1415) is an O-(5'-phospho-RNA)-tyrosine. In terms of domain architecture, Peptidase C3 spans 1431-1643 (DAQSVVDISN…ITKEMIEEML (213 aa)). Residues histidine 1477, aspartate 1515, and cysteine 1603 each act as for protease 3C activity in the active site. The region spanning 1880 to 2001 (DLVVGLDFSN…CIKKEYLDQK (122 aa)) is the RdRp catalytic domain.

This sequence belongs to the picornaviridae polyprotein family. Post-translationally, specific enzymatic cleavages by the viral protease in vivo yield a variety of precursors and mature proteins. During virion maturation, non-infectious particles are rendered infectious following cleavage of VP0. This maturation cleavage is followed by a conformational change of the particle. VPg is uridylylated by the polymerase and is covalently linked to the 5'-end of genomic RNA. This uridylylated form acts as a nucleotide-peptide primer for the polymerase.

Its subcellular location is the virion. The protein localises to the host cytoplasm. It localises to the host cytoplasmic vesicle membrane. It catalyses the reaction RNA(n) + a ribonucleoside 5'-triphosphate = RNA(n+1) + diphosphate. The catalysed reaction is a ribonucleoside 5'-triphosphate + H2O = a ribonucleoside 5'-diphosphate + phosphate + H(+). The enzyme catalyses Selective cleavage of Gln-|-Gly bond in the poliovirus polyprotein. In other picornavirus reactions Glu may be substituted for Gln, and Ser or Thr for Gly.. Capsid proteins VP1, VP2, and VP3 form a closed capsid enclosing the viral positive strand RNA genome. All these proteins contain a beta-sheet structure called beta-barrel jelly roll. Together they form an icosahedral capsid (T=3) composed of 60 copies of each VP1, VP2, and VP3, with a diameter of approximately 300 Angstroms. VP1 is situated at the 12 fivefold axes, whereas VP2 and VP3 are located at the quasi-sixfold axes. In terms of biological role, VP0 precursor is a component of immature procapsids. The N-terminal domain of VP0, protein VP4, is needed for the assembly of 12 pentamers into the icosahedral structure. Unlike other picornaviruses, AEV VP4 may not be myristoylated. Functionally, protein 2B and 2BC precursor affect membrane integrity and cause an increase in membrane permeability. Its function is as follows. Associates with and induces structural rearrangements of intracellular membranes. It displays RNA-binding, nucleotide binding and NTPase activities. Protein 3A, via its hydrophobic domain, serves as membrane anchor. In terms of biological role, protein 3B is covalently linked to the 5'-end of both the positive-strand and negative-strand genomic RNAs. It acts as a genome-linked replication primer. Functionally, cysteine protease that generates mature viral proteins from the precursor polyprotein. In addition to its proteolytic activity, it binds to viral RNA, and thus influences viral genome replication. RNA and substrate bind cooperatively to the protease. Its function is as follows. RNA-directed RNA polymerase 3D-POL replicates genomic and antigenomic RNA by recognizing replications specific signals. This chain is Genome polyprotein, found in Avian encephalomyelitis virus (strain Van Reokel) (AEV).